Consider the following 611-residue polypeptide: Adenosylhomocysteinase 3 (611 aa).

Low complexity-rich tracts occupy residues 1–14, 40–57, and 68–78; these read MSVQ…AAKV, AMAP…APAA, and GPAAALSPAAG. The segment at 1–184 is disordered; the sequence is MSVQVVSAAA…KQQKNSKGNS (184 aa). The residue at position 2 (Ser2) is an N-acetylserine. The segment at 2 to 109 is LISN domain, inhibits interaction with ITPR1; that stretch reads SVQVVSAAAA…DGGEALVSPD (108 aa). Ser107 is subject to Phosphoserine. Residues 135-144 show a composition bias toward basic residues; that stretch reads RPTKIGRRSL. Residues 145 to 164 show a composition bias toward low complexity; that stretch reads SRSISQSSTDSYSSAASYTD. A phosphoserine mark is found at Ser149, Ser152, Ser155, and Ser158. Positions 236, 310, and 335 each coordinate substrate. An NAD(+)-binding site is contributed by 336–338; it reads SVT. Lys365 and Asp369 together coordinate substrate. Residues Asn370, 401 to 406, Glu422, Asn457, 478 to 479, and Asn525 contribute to the NAD(+) site; these read GEVGKG and MG.

The protein belongs to the adenosylhomocysteinase family. Homotetramer. Forms heteromultimers with AHCYL1 (via the C-terminal region). Interacts with ITPR1; with lower affinity than AHCYL1 and maybe via ITPR1. Interacts with SLC4A4. Interacts with ZCCHC4. NAD(+) is required as a cofactor. Post-translationally, phosphorylated during neuronal differentiation at the LISN domain. Expressed in parotid and acinar cells (at protein level).

The protein resides in the cytoplasm. Its subcellular location is the microsome. The catalysed reaction is S-adenosyl-L-homocysteine + H2O = L-homocysteine + adenosine. The protein operates within amino-acid biosynthesis; L-homocysteine biosynthesis; L-homocysteine from S-adenosyl-L-homocysteine: step 1/1. May regulate the electrogenic sodium/bicarbonate cotransporter SLC4A4 activity and Mg(2+)-sensitivity. On the contrary of its homolog AHCYL1, does not regulate ITPR1 sensitivity to inositol 1,4,5-trisphosphate. This Bos taurus (Bovine) protein is Adenosylhomocysteinase 3.